We begin with the raw amino-acid sequence, 352 residues long: Small ribosomal subunit biogenesis GTPase RsgA (352 aa).

Residues 1–11 (MTKRKLSKGQQ) are compositionally biased toward basic residues. Positions 1–35 (MTKRKLSKGQQRRVQENHKKRLQSKEKKNHVELDD) are disordered. Positions 13 to 33 (RVQENHKKRLQSKEKKNHVEL) are enriched in basic and acidic residues. Residues 114–276 (YYDGIKPIAA…VIDSPGVREF (163 aa)) enclose the CP-type G domain. Residues 162–165 (NKVD) and 216–224 (GQSGVGKSS) contribute to the GTP site. 4 residues coordinate Zn(2+): Cys300, Cys305, His307, and Cys313.

The protein belongs to the TRAFAC class YlqF/YawG GTPase family. RsgA subfamily. As to quaternary structure, monomer. Associates with 30S ribosomal subunit, binds 16S rRNA. Requires Zn(2+) as cofactor.

Its subcellular location is the cytoplasm. One of several proteins that assist in the late maturation steps of the functional core of the 30S ribosomal subunit. Helps release RbfA from mature subunits. May play a role in the assembly of ribosomal proteins into the subunit. Circularly permuted GTPase that catalyzes slow GTP hydrolysis, GTPase activity is stimulated by the 30S ribosomal subunit. The sequence is that of Small ribosomal subunit biogenesis GTPase RsgA from Proteus mirabilis (strain HI4320).